Reading from the N-terminus, the 304-residue chain is Energy-coupling factor transporter ATP-binding protein EcfA2 (304 aa).

Residues 11-260 (LKADEILAVS…QTFLEKTTIV (250 aa)) enclose the ABC transporter domain. 54-61 (GDSGSGKS) lines the ATP pocket.

Belongs to the ABC transporter superfamily. Energy-coupling factor EcfA family. As to quaternary structure, forms a stable energy-coupling factor (ECF) transporter complex composed of 2 membrane-embedded substrate-binding proteins (S component), 2 ATP-binding proteins (A component) and 2 transmembrane proteins (T component).

The protein resides in the cell membrane. In terms of biological role, ATP-binding (A) component of a common energy-coupling factor (ECF) ABC-transporter complex. Unlike classic ABC transporters this ECF transporter provides the energy necessary to transport a number of different substrates. The protein is Energy-coupling factor transporter ATP-binding protein EcfA2 of Mycoplasma genitalium (strain ATCC 33530 / DSM 19775 / NCTC 10195 / G37) (Mycoplasmoides genitalium).